A 123-amino-acid polypeptide reads, in one-letter code: Small ribosomal subunit protein uS12c (123 aa).

The disordered stretch occupies residues 9-31; the sequence is RNKRQAAENKTKSPALQRSPQRR.

It belongs to the universal ribosomal protein uS12 family. In terms of assembly, part of the 30S ribosomal subunit.

It is found in the plastid. Its subcellular location is the chloroplast. With S4 and S5 plays an important role in translational accuracy. Located at the interface of the 30S and 50S subunits. This is Small ribosomal subunit protein uS12c (rps12) from Spirogyra maxima (Green alga).